A 207-amino-acid chain; its full sequence is ATP-dependent Clp protease proteolytic subunit (207 aa).

The Nucleophile role is filled by serine 111. The active site involves histidine 136.

The protein belongs to the peptidase S14 family. Fourteen ClpP subunits assemble into 2 heptameric rings which stack back to back to give a disk-like structure with a central cavity, resembling the structure of eukaryotic proteasomes.

It localises to the cytoplasm. The enzyme catalyses Hydrolysis of proteins to small peptides in the presence of ATP and magnesium. alpha-casein is the usual test substrate. In the absence of ATP, only oligopeptides shorter than five residues are hydrolyzed (such as succinyl-Leu-Tyr-|-NHMec, and Leu-Tyr-Leu-|-Tyr-Trp, in which cleavage of the -Tyr-|-Leu- and -Tyr-|-Trp bonds also occurs).. Cleaves peptides in various proteins in a process that requires ATP hydrolysis. Has a chymotrypsin-like activity. Plays a major role in the degradation of misfolded proteins. The polypeptide is ATP-dependent Clp protease proteolytic subunit (Psychromonas ingrahamii (strain DSM 17664 / CCUG 51855 / 37)).